The primary structure comprises 426 residues: MVVDKIQAIRGMNDILPDSTSVWRFIEQTFINCLVRYGYKEIRFPIVENTQLFKRTIGEITDIVEKEMYTFNDLNGDSITLRPEGTAGCVRACIEHGLLHNQQQKLWYLGPMFRHERPQKGRYRQFNQFGVEALGITGTAIELELISICRRLWTDLGFSQSVQLQVNSLGEINERQKYRSILVEYLRDHFQILDEDSKRRLDKNPLRVLDSKNPDLQQLIQNAPKLIDVLGDDSREHFQSFCNGLETLGIPYSINPVLVRGLDYYGQTVFEWVTDQLGSQATICAGGRYDMLVEFLGGAPTPAVGFALGLERIFLLMETLNLLNESNNKQSIFIIATNEEAILKALVMAESIRNAHPSLDVITNTTGGGFKSQFKKADKSGARLALILGEDEIAREYVSIKDLRTEIEQISIPMTKINEFLQDYLA.

It belongs to the class-II aminoacyl-tRNA synthetase family. As to quaternary structure, homodimer.

Its subcellular location is the cytoplasm. It carries out the reaction tRNA(His) + L-histidine + ATP = L-histidyl-tRNA(His) + AMP + diphosphate + H(+). This is Histidine--tRNA ligase from Legionella pneumophila (strain Lens).